Consider the following 360-residue polypeptide: DNA primase large subunit PriL (360 aa).

[4Fe-4S] cluster contacts are provided by Cys237, Cys309, Cys318, and Cys325. Positions 340-360 are disordered; it reads DDGDDDDLADWRDREDDDSPD.

This sequence belongs to the eukaryotic-type primase large subunit family. In terms of assembly, heterodimer of a small subunit (PriS) and a large subunit (PriL). It depends on [4Fe-4S] cluster as a cofactor.

Its function is as follows. Regulatory subunit of DNA primase, an RNA polymerase that catalyzes the synthesis of short RNA molecules used as primers for DNA polymerase during DNA replication. Stabilizes and modulates the activity of the small subunit, increasing the rate of DNA synthesis, and conferring RNA synthesis capability. The DNA polymerase activity may enable DNA primase to also catalyze primer extension after primer synthesis. May also play a role in DNA repair. The polypeptide is DNA primase large subunit PriL (Halobacterium salinarum (strain ATCC 29341 / DSM 671 / R1)).